The chain runs to 281 residues: MHSVVCIKQLPDSAQIRVHPVTNTIMRQGVPAIINPYDLFALEEALRLKDKFGGTVTVVTMGPPMAEAALRKCLSFGADDAILVSDRAFAGSDTLATSYALSAVIRKIMEDMPVDLIFTGKQTIDGDTAQVGPGIAKRLDYQLLTYVSRIVDVDTAKKEIQVERRAEGGVQLLETSLPCLITMLEGTNEMRFGDLDDLFRAARHELKVWDRVAAGIDTVEMIGLKGSPTVVSKVFAPKPRSKRAELIESHDSDPKNLAEAALAKLFTQHPNLEQEIAKRAV.

Belongs to the ETF beta-subunit/FixA family. As to quaternary structure, fixA and FixB form a heterodimer.

Its function is as follows. May play a role in a redox process involved in nitrogen fixation. This Azotobacter vinelandii protein is Protein FixA (fixA).